Here is a 680-residue protein sequence, read N- to C-terminus: Penicillin-binding protein 2B (680 aa).

The Cytoplasmic segment spans residues M1–S8. Residues I9–G29 traverse the membrane as a helical segment. At R30–N680 the chain is on the extracellular side. Catalysis depends on S386, which acts as the Acyl-ester intermediate.

This sequence belongs to the transpeptidase family. In terms of assembly, interacts with MreC in the elongasome.

Its subcellular location is the cell membrane. In terms of biological role, a transpeptidase that forms peptide cross-links between adjacent glycan strands in cell wall peptidoglycan (PG). Part of the elongasome machinery that synthesizes peripheral PG. This chain is Penicillin-binding protein 2B, found in Streptococcus pneumoniae serotype 2 (strain D39 / NCTC 7466).